We begin with the raw amino-acid sequence, 228 residues long: Glycerol-3-phosphate acyltransferase (228 aa).

A run of 6 helical transmembrane segments spans residues 1–21 (MINW…LGAT), 56–76 (VPAL…IALV), 104–124 (MVII…WIGF), 136–156 (ILLA…IVVL), 161–181 (IVSL…FFTG), and 183–203 (PLPY…RHIS).

Belongs to the PlsY family. As to quaternary structure, probably interacts with PlsX.

The protein resides in the cell inner membrane. It carries out the reaction an acyl phosphate + sn-glycerol 3-phosphate = a 1-acyl-sn-glycero-3-phosphate + phosphate. It participates in lipid metabolism; phospholipid metabolism. Its function is as follows. Catalyzes the transfer of an acyl group from acyl-phosphate (acyl-PO(4)) to glycerol-3-phosphate (G3P) to form lysophosphatidic acid (LPA). This enzyme utilizes acyl-phosphate as fatty acyl donor, but not acyl-CoA or acyl-ACP. The chain is Glycerol-3-phosphate acyltransferase from Trichodesmium erythraeum (strain IMS101).